The chain runs to 541 residues: Arginine--tRNA ligase (541 aa).

A 'HIGH' region motif is present at residues 119-129 (ANPTGPLHIGH).

The protein belongs to the class-I aminoacyl-tRNA synthetase family. In terms of assembly, monomer.

The protein resides in the cytoplasm. The catalysed reaction is tRNA(Arg) + L-arginine + ATP = L-arginyl-tRNA(Arg) + AMP + diphosphate. This chain is Arginine--tRNA ligase, found in Helicobacter pylori (strain P12).